Here is a 113-residue protein sequence, read N- to C-terminus: U11-theraphotoxin-Hhn1a (113 aa).

Residues 1–21 (MNTVRVTFLLVFVLAVSLGQA) form the signal peptide. Positions 22–74 (DKDENRMEMQEKTEQGKSYLDFAENLLLQKLEELVAKLLEEDSEESRNSRQKR) are excised as a propeptide. 3 disulfide bridges follow: Cys75–Cys90, Cys82–Cys95, and Cys89–Cys110.

This sequence belongs to the neurotoxin 14 (magi-1) family. 01 (HNTX-16) subfamily. Expressed by the venom gland.

It localises to the secreted. Probable ion channel inhibitor. This Cyriopagopus hainanus (Chinese bird spider) protein is U11-theraphotoxin-Hhn1a.